We begin with the raw amino-acid sequence, 378 residues long: Decaprenyl-diphosphate synthase subunit 1 (378 aa).

Lys72, Arg75, and His130 together coordinate isopentenyl diphosphate. 2 residues coordinate Mg(2+): Asp137 and Asp141. Arg147 is an isopentenyl diphosphate binding site.

The protein belongs to the FPP/GGPP synthase family. As to quaternary structure, heterotetramer of 2 dps1 and 2 dlp1 subunits. It depends on Mg(2+) as a cofactor.

Its subcellular location is the mitochondrion. The catalysed reaction is 7 isopentenyl diphosphate + (2E,6E)-farnesyl diphosphate = all-trans-decaprenyl diphosphate + 7 diphosphate. The protein operates within cofactor biosynthesis; ubiquinone biosynthesis. In terms of biological role, supplies decaprenyl diphosphate, the precursor for the side chain of the isoprenoid quinones ubiquinone-10. The protein is Decaprenyl-diphosphate synthase subunit 1 (dps1) of Schizosaccharomyces pombe (strain 972 / ATCC 24843) (Fission yeast).